The primary structure comprises 329 residues: 4-hydroxythreonine-4-phosphate dehydrogenase (329 aa).

Substrate is bound by residues H136 and T137. 3 residues coordinate a divalent metal cation: H166, H211, and H266. The substrate site is built by K274, N283, and R292.

This sequence belongs to the PdxA family. As to quaternary structure, homodimer. Zn(2+) is required as a cofactor. It depends on Mg(2+) as a cofactor. Requires Co(2+) as cofactor.

It localises to the cytoplasm. It catalyses the reaction 4-(phosphooxy)-L-threonine + NAD(+) = 3-amino-2-oxopropyl phosphate + CO2 + NADH. Its pathway is cofactor biosynthesis; pyridoxine 5'-phosphate biosynthesis; pyridoxine 5'-phosphate from D-erythrose 4-phosphate: step 4/5. Its function is as follows. Catalyzes the NAD(P)-dependent oxidation of 4-(phosphooxy)-L-threonine (HTP) into 2-amino-3-oxo-4-(phosphooxy)butyric acid which spontaneously decarboxylates to form 3-amino-2-oxopropyl phosphate (AHAP). This is 4-hydroxythreonine-4-phosphate dehydrogenase from Escherichia coli (strain K12 / MC4100 / BW2952).